Consider the following 511-residue polypeptide: Maturase K (511 aa).

This sequence belongs to the intron maturase 2 family. MatK subfamily.

It localises to the plastid. Its function is as follows. Usually encoded in the trnK tRNA gene intron. Probably assists in splicing its own and other chloroplast group II introns. This is Maturase K from Lathraea clandestina (Purple toothwort).